The primary structure comprises 256 residues: Coiled-coil domain-containing protein 90B, mitochondrial (256 aa).

A mitochondrion-targeting transit peptide spans 1–42 (MRSRWIWRFLRPDGGGIRWTSTPHGRLSPALRRGFLTTTTKS). The stretch at 129 to 167 (LEKSEFANLRAENEKMKIELDQVKQQLTNETSRIRADNK) forms a coiled coil. The chain crosses the membrane as a helical span at residues 231–253 (TIRYLAASVFTCLAIALGFYRFW).

This sequence belongs to the CCDC90 family. As to quaternary structure, interacts with MCU.

Its subcellular location is the mitochondrion membrane. The protein is Coiled-coil domain-containing protein 90B, mitochondrial (Ccdc90b) of Mus musculus (Mouse).